A 181-amino-acid chain; its full sequence is Ferritin heavy chain (181 aa).

N-acetylmethionine is present on Met-1. At Thr-2 the chain carries N-acetylthreonine; in Ferritin heavy chain, N-terminally processed. One can recognise a Ferritin-like diiron domain in the interval 11–160; that stretch reads QNYHQDSEAA…DHITNLHRMG (150 aa). Phosphoserine is present on Ser-179.

This sequence belongs to the ferritin family. Oligomer of 24 subunits. There are two types of subunits: L (light) chain and H (heavy) chain. The major chain can be light or heavy, depending on the species and tissue type. The functional molecule forms a roughly spherical shell with a diameter of 12 nm and contains a central cavity into which the insoluble mineral iron core is deposited. Interacts with NCOA4; NCOA4 promotes targeting of the iron-binding ferritin complex to autolysosomes following starvation or iron depletion. As to quaternary structure, (Microbial infection) Interacts with classical swine fever virus protein NS4B. In terms of assembly, (Microbial infection) Interacts with Porcine circovirus 2 ORF4 protein.

The protein localises to the cytoplasm. The protein resides in the lysosome. Its subcellular location is the cytoplasmic vesicle. It is found in the autophagosome. The enzyme catalyses 4 Fe(2+) + O2 + 4 H(+) = 4 Fe(3+) + 2 H2O. Stores iron in a soluble, non-toxic, readily available form. Important for iron homeostasis. Has ferroxidase activity. Iron is taken up in the ferrous form and deposited as ferric hydroxides after oxidation. Also plays a role in delivery of iron to cells. Mediates iron uptake in capsule cells of the developing kidney. Delivery to lysosomes is mediated by the cargo receptor NCOA4 for autophagic degradation and release of iron. Its function is as follows. (Microbial infection) Is unable to assume its function upon interaction with viral proteins, thereby increasing Fe concentration in the cytoplasm. This would inhibit the accumulation of reactive oxygen in host cells, leading to reduced apoptosis and increasing the survival of virus infected cell. This is Ferritin heavy chain (FTH1) from Sus scrofa (Pig).